Consider the following 174-residue polypeptide: Adenine phosphoribosyltransferase (174 aa).

The protein belongs to the purine/pyrimidine phosphoribosyltransferase family. Homodimer.

It localises to the cytoplasm. The catalysed reaction is AMP + diphosphate = 5-phospho-alpha-D-ribose 1-diphosphate + adenine. It participates in purine metabolism; AMP biosynthesis via salvage pathway; AMP from adenine: step 1/1. Its function is as follows. Catalyzes a salvage reaction resulting in the formation of AMP, that is energically less costly than de novo synthesis. The chain is Adenine phosphoribosyltransferase from Nitrosomonas eutropha (strain DSM 101675 / C91 / Nm57).